A 360-amino-acid polypeptide reads, in one-letter code: MAAERGAGQQQSQEMMEVDRRVESEESGDEEGKKHGGGIVADLSQQSLKDGVERGAEDPEEEHELAVDMETISLDRDAEDVDLNHYRIGKIEGFEVLKKVKSLCLRQNLIKCIENLDELQSLRELDLYDNQIKKIENLEALTELEVLDISFNLLRNIEGIDKLTQLKKLFLVNNKINKIENISTLQQLQMLELGSNRIRAIENIDTLTNLESLFLGKNKITKLQNLDALSNLTVLSMQSNRLTKIEGLQNLVNLRELYLSHNGIEVIEGLENNNKLTMLDIASNRIKKIENISHLTELQEFWMNDNLLESWSDLDELKGARSLETVYLERNPLQKDPQYRRKVMLALPSVRQIDATFVRF.

The tract at residues 1 to 63 is disordered; that stretch reads MAAERGAGQQ…RGAEDPEEEH (63 aa). N-acetylalanine is present on Ala-2. Ser-12, Ser-24, Ser-27, Ser-44, and Ser-47 each carry phosphoserine. The span at 17 to 34 shows a compositional bias: basic and acidic residues; the sequence is EVDRRVESEESGDEEGKK. 11 LRR repeats span residues 77–98, 99–120, 121–142, 143–164, 165–186, 187–208, 209–230, 231–252, 253–274, 275–296, and 297–318; these read DAED…EVLK, KVKS…DELQ, SLRE…EALT, ELEV…DKLT, QLKK…STLQ, QLQM…DTLT, NLES…DALS, NLTV…QNLV, NLRE…ENNN, KLTM…SHLT, and ELQE…DELK. Position 322 is a phosphoserine (Ser-322). Positions 331 to 360 constitute an LRRCT domain; that stretch reads NPLQKDPQYRRKVMLALPSVRQIDATFVRF.

The protein belongs to the SDS22 family. In terms of assembly, interacts with PPP1CA, PPP1CB and PPP1CC/PPP1G.

It is found in the nucleus. Functionally, regulatory subunit of protein phosphatase 1. This chain is Protein phosphatase 1 regulatory subunit 7 (Ppp1r7), found in Rattus norvegicus (Rat).